A 253-amino-acid polypeptide reads, in one-letter code: Triosephosphate isomerase (253 aa).

A substrate-binding site is contributed by Asn9–Lys11. His96 serves as the catalytic Electrophile. The Proton acceptor role is filled by Glu168. Substrate-binding positions include Gly174, Ser213, and Gly234–Gly235.

It belongs to the triosephosphate isomerase family. As to quaternary structure, homodimer.

The protein resides in the cytoplasm. It catalyses the reaction D-glyceraldehyde 3-phosphate = dihydroxyacetone phosphate. Its pathway is carbohydrate biosynthesis; gluconeogenesis. It functions in the pathway carbohydrate degradation; glycolysis; D-glyceraldehyde 3-phosphate from glycerone phosphate: step 1/1. In terms of biological role, involved in the gluconeogenesis. Catalyzes stereospecifically the conversion of dihydroxyacetone phosphate (DHAP) to D-glyceraldehyde-3-phosphate (G3P). The chain is Triosephosphate isomerase from Hydrogenovibrio crunogenus (strain DSM 25203 / XCL-2) (Thiomicrospira crunogena).